The following is a 142-amino-acid chain: Large ribosomal subunit protein uL11 (142 aa).

This sequence belongs to the universal ribosomal protein uL11 family. In terms of assembly, part of the ribosomal stalk of the 50S ribosomal subunit. Interacts with L10 and the large rRNA to form the base of the stalk. L10 forms an elongated spine to which L12 dimers bind in a sequential fashion forming a multimeric L10(L12)X complex. Post-translationally, one or more lysine residues are methylated.

Forms part of the ribosomal stalk which helps the ribosome interact with GTP-bound translation factors. The polypeptide is Large ribosomal subunit protein uL11 (Hydrogenovibrio crunogenus (strain DSM 25203 / XCL-2) (Thiomicrospira crunogena)).